A 1098-amino-acid chain; its full sequence is Tudor domain-containing protein 7 (1098 aa).

Residues 3 to 76 (EGDLVSKMLR…SGEITCYAMA (74 aa)) enclose the HTH OST-type 1 domain. The disordered stretch occupies residues 129 to 156 (ASNFSVGKKPNPAPLRDKGNSVGVKPDA). The region spanning 233–302 (KMDEVQNRIK…GQDLLLYPAK (70 aa)) is the HTH OST-type 2 domain. Serine 319 carries the post-translational modification Phosphoserine. An HTH OST-type 3 domain is found at 337 to 406 (MAGDFKEKVA…PQKAILYAKL (70 aa)). Tudor domains follow at residues 513–570 (AVNV…FCSL) and 703–760 (LPFC…FLQE). Residues 855 to 874 (SGADSPNSKNGNMPMSGNTG) form a disordered region. Serine 859 bears the Phosphoserine mark. The interaction with CDK17 stretch occupies residues 861-1098 (NSKNGNMPMS…EYLIELSKVN (238 aa)). The segment at 893–1098 (TSAFSTEELP…EYLIELSKVN (206 aa)) is interaction with CABLES1.

This sequence belongs to the TDRD7 family. Found in a mRNP complex, at least composed of TDRD1, TDRD6, TDRD7 and DDX4. Found in a complex containing CABLES1, CDK16 and CDK17. Interacts with CABLES1, CDK17 and PIWIL1.

It localises to the cytoplasm. Component of specific cytoplasmic RNA granules involved in post-transcriptional regulation of specific genes: probably acts by binding to specific mRNAs and regulating their translation. Required for lens transparency during lens development, by regulating translation of genes such as CRYBB3 and HSPB1 in the developing lens. Also required during spermatogenesis. The polypeptide is Tudor domain-containing protein 7 (TDRD7) (Homo sapiens (Human)).